The sequence spans 273 residues: Urease accessory protein UreD (273 aa).

It belongs to the UreD family. In terms of assembly, ureD, UreF and UreG form a complex that acts as a GTP-hydrolysis-dependent molecular chaperone, activating the urease apoprotein by helping to assemble the nickel containing metallocenter of UreC. The UreE protein probably delivers the nickel.

It is found in the cytoplasm. Functionally, required for maturation of urease via the functional incorporation of the urease nickel metallocenter. The polypeptide is Urease accessory protein UreD (Rhizobium leguminosarum bv. trifolii (strain WSM2304)).